A 140-amino-acid chain; its full sequence is Holo-[acyl-carrier-protein] synthase (140 aa).

Residues aspartate 8 and glutamate 62 each coordinate Mg(2+).

The protein belongs to the P-Pant transferase superfamily. AcpS family. The cofactor is Mg(2+).

It is found in the cytoplasm. The enzyme catalyses apo-[ACP] + CoA = holo-[ACP] + adenosine 3',5'-bisphosphate + H(+). Functionally, transfers the 4'-phosphopantetheine moiety from coenzyme A to a Ser of acyl-carrier-protein. In Cupriavidus pinatubonensis (strain JMP 134 / LMG 1197) (Cupriavidus necator (strain JMP 134)), this protein is Holo-[acyl-carrier-protein] synthase.